The sequence spans 275 residues: Rhamnulose-1-phosphate aldolase (275 aa).

E117 is a catalytic residue. The Zn(2+) site is built by H141, H143, and H212.

It belongs to the aldolase class II family. RhaD subfamily. In terms of assembly, homotetramer. Zn(2+) serves as cofactor.

The protein localises to the cytoplasm. It catalyses the reaction L-rhamnulose 1-phosphate = (S)-lactaldehyde + dihydroxyacetone phosphate. Its pathway is carbohydrate degradation; L-rhamnose degradation; glycerone phosphate from L-rhamnose: step 3/3. In terms of biological role, catalyzes the reversible cleavage of L-rhamnulose-1-phosphate to dihydroxyacetone phosphate (DHAP) and L-lactaldehyde. This Salmonella paratyphi C (strain RKS4594) protein is Rhamnulose-1-phosphate aldolase.